Here is a 522-residue protein sequence, read N- to C-terminus: Probable cytochrome P450 12e1, mitochondrial (522 aa).

Cys468 is a binding site for heme.

The protein belongs to the cytochrome P450 family. Heme is required as a cofactor.

Its subcellular location is the mitochondrion membrane. The chain is Probable cytochrome P450 12e1, mitochondrial (Cyp12e1) from Drosophila melanogaster (Fruit fly).